The chain runs to 99 residues: Cytochrome c-555 (99 aa).

Positions 23, 26, 27, and 73 each coordinate heme c.

In terms of processing, binds 1 heme c group covalently per subunit.

The chain is Cytochrome c-555 from Prosthecochloris aestuarii.